We begin with the raw amino-acid sequence, 501 residues long: Aspartate--tRNA ligase, cytoplasmic (501 aa).

T52 carries the phosphothreonine modification. K74 bears the N6-acetyllysine mark. Residue E229 coordinates L-aspartate. The residue at position 249 (S249) is a Phosphoserine. Residues 251–254 (QLYK) are aspartate. Residue R273 coordinates L-aspartate. ATP contacts are provided by residues 273-275 (RAE) and 281-283 (RHL). An N6-acetyllysine modification is found at K374. E424 contributes to the ATP binding site. Residues S427 and R431 each coordinate L-aspartate. 472–475 (GLER) lines the ATP pocket.

It belongs to the class-II aminoacyl-tRNA synthetase family. Type 2 subfamily. In terms of assembly, homodimer. Part of a multisubunit complex that groups tRNA ligases for Arg (RARS1), Asp (DARS1), Gln (QARS1), Ile (IARS1), Leu (LARS1), Lys (KARS1), Met (MARS1) the bifunctional ligase for Glu and Pro (EPRS1) and the auxiliary subunits AIMP1/p43, AIMP2/p38 and EEF1E1/p18.

The protein localises to the cytoplasm. The catalysed reaction is tRNA(Asp) + L-aspartate + ATP = L-aspartyl-tRNA(Asp) + AMP + diphosphate. Its function is as follows. Catalyzes the specific attachment of an amino acid to its cognate tRNA in a 2 step reaction: the amino acid (AA) is first activated by ATP to form AA-AMP and then transferred to the acceptor end of the tRNA. This Mus musculus (Mouse) protein is Aspartate--tRNA ligase, cytoplasmic (Dars1).